The sequence spans 48 residues: Phospholipase A2 TI-Nh (48 aa).

His-25 is a catalytic residue. Asp-26 contributes to the Ca(2+) binding site.

Belongs to the phospholipase A2 family. Group I subfamily. D49 sub-subfamily. Monomer. It depends on Ca(2+) as a cofactor. As to expression, expressed by the venom gland.

The protein localises to the secreted. The catalysed reaction is a 1,2-diacyl-sn-glycero-3-phosphocholine + H2O = a 1-acyl-sn-glycero-3-phosphocholine + a fatty acid + H(+). Phospholipase A2 with weak enzymatic activity, which partially inhibits thrombin enzymatic activity (Ki=73 nM), completely inhibits thrombin-induced platelet aggregation and retards fibrin clot formation (IC(50)=0.2 nM). May exert this anticoagulant effect through a non-enzymatic mechanism. The chain is Phospholipase A2 TI-Nh from Naja haje haje (Egyptian cobra).